The following is a 257-amino-acid chain: Thiazole synthase (257 aa).

Catalysis depends on K96, which acts as the Schiff-base intermediate with DXP. 1-deoxy-D-xylulose 5-phosphate is bound by residues G157, 184-185, and 206-207; these read AG and NT.

The protein belongs to the ThiG family. In terms of assembly, homotetramer. Forms heterodimers with either ThiH or ThiS.

The protein resides in the cytoplasm. The catalysed reaction is [ThiS sulfur-carrier protein]-C-terminal-Gly-aminoethanethioate + 2-iminoacetate + 1-deoxy-D-xylulose 5-phosphate = [ThiS sulfur-carrier protein]-C-terminal Gly-Gly + 2-[(2R,5Z)-2-carboxy-4-methylthiazol-5(2H)-ylidene]ethyl phosphate + 2 H2O + H(+). Its pathway is cofactor biosynthesis; thiamine diphosphate biosynthesis. Functionally, catalyzes the rearrangement of 1-deoxy-D-xylulose 5-phosphate (DXP) to produce the thiazole phosphate moiety of thiamine. Sulfur is provided by the thiocarboxylate moiety of the carrier protein ThiS. In vitro, sulfur can be provided by H(2)S. This is Thiazole synthase from Rhizobium etli (strain ATCC 51251 / DSM 11541 / JCM 21823 / NBRC 15573 / CFN 42).